We begin with the raw amino-acid sequence, 129 residues long: D-ribose pyranase (129 aa).

The active-site Proton donor is His-20. Residues Asp-28, His-96, and 118-120 (YAN) each bind substrate.

Belongs to the RbsD / FucU family. RbsD subfamily. As to quaternary structure, homodecamer.

The protein resides in the cytoplasm. It catalyses the reaction beta-D-ribopyranose = beta-D-ribofuranose. It functions in the pathway carbohydrate metabolism; D-ribose degradation; D-ribose 5-phosphate from beta-D-ribopyranose: step 1/2. Its function is as follows. Catalyzes the interconversion of beta-pyran and beta-furan forms of D-ribose. This chain is D-ribose pyranase, found in Halalkalibacterium halodurans (strain ATCC BAA-125 / DSM 18197 / FERM 7344 / JCM 9153 / C-125) (Bacillus halodurans).